The following is a 115-amino-acid chain: Large ribosomal subunit protein uL18 (115 aa).

This sequence belongs to the universal ribosomal protein uL18 family. In terms of assembly, part of the 50S ribosomal subunit; part of the 5S rRNA/L5/L18/L25 subcomplex. Contacts the 5S and 23S rRNAs.

This is one of the proteins that bind and probably mediate the attachment of the 5S RNA into the large ribosomal subunit, where it forms part of the central protuberance. The sequence is that of Large ribosomal subunit protein uL18 from Vesicomyosocius okutanii subsp. Calyptogena okutanii (strain HA).